The chain runs to 195 residues: Adenylate kinase (195 aa).

Residue 8–16 participates in ATP binding; the sequence is GIPGVGKTT.

Belongs to the archaeal adenylate kinase family. Homotrimer.

The protein resides in the cytoplasm. The catalysed reaction is AMP + ATP = 2 ADP. The chain is Adenylate kinase (adkA) from Saccharolobus solfataricus (strain ATCC 35092 / DSM 1617 / JCM 11322 / P2) (Sulfolobus solfataricus).